The sequence spans 552 residues: uncharacterized protein (552 aa).

It belongs to the transposase 25 family.

This is an uncharacterized protein from Sinorhizobium fredii (strain NBRC 101917 / NGR234).